A 148-amino-acid chain; its full sequence is Globin, monomeric component M-IV (148 aa).

Residues 2-147 (GLSAAQRQVV…ISGALISGLQ (146 aa)) form the Globin domain. Residue H91 participates in heme b binding.

As to quaternary structure, monomer.

The polypeptide is Globin, monomeric component M-IV (Glycera dibranchiata (Bloodworm)).